We begin with the raw amino-acid sequence, 60 residues long: MAVQQVKKSRSKRDMRRSHDSLTNPTLSTDKSTGELHLRHHVSPNGFYKGRKVVDTKSED.

The disordered stretch occupies residues 1–60 (MAVQQVKKSRSKRDMRRSHDSLTNPTLSTDKSTGELHLRHHVSPNGFYKGRKVVDTKSED). The span at 7–16 (KKSRSKRDMR) shows a compositional bias: basic residues. Positions 22-31 (LTNPTLSTDK) are enriched in polar residues.

It belongs to the bacterial ribosomal protein bL32 family.

This chain is Large ribosomal subunit protein bL32, found in Francisella tularensis subsp. holarctica (strain LVS).